We begin with the raw amino-acid sequence, 375 residues long: Naringenin 7-O-methyltransferase (375 aa).

136–142 contacts substrate; the sequence is LNLDKVF. Residues 168–188 are substrate binding; the sequence is LFQYLGQDGNEPSNTLFNQAM. S-adenosyl-L-methionine-binding residues include glycine 219, aspartate 242, methionine 263, and lysine 276. The Proton acceptor role is filled by histidine 280.

Belongs to the class I-like SAM-binding methyltransferase superfamily. Cation-independent O-methyltransferase family. COMT subfamily.

The catalysed reaction is (2S)-naringenin + S-adenosyl-L-methionine = (2S)-sakuranetin + S-adenosyl-L-homocysteine + H(+). S-adenosyl-L-methionine-dependent methyltransferase involved in the biosynthesis of the sakuranetin, an inducible defense mechanism of O.sativa against pathogen attack. The polypeptide is Naringenin 7-O-methyltransferase (Oryza sativa subsp. japonica (Rice)).